We begin with the raw amino-acid sequence, 197 residues long: Protein GrpE (197 aa).

Residues 1 to 27 (MTKQEKAENQEKPTEETVEETPKKETP) show a composition bias toward basic and acidic residues. The tract at residues 1–50 (MTKQEKAENQEKPTEETVEETPKKETPFEPVMEADEVEETTEAQAPVEEA) is disordered. A compositionally biased stretch (acidic residues) spans 32–41 (MEADEVEETT).

This sequence belongs to the GrpE family. As to quaternary structure, homodimer.

Its subcellular location is the cytoplasm. Its function is as follows. Participates actively in the response to hyperosmotic and heat shock by preventing the aggregation of stress-denatured proteins, in association with DnaK and GrpE. It is the nucleotide exchange factor for DnaK and may function as a thermosensor. Unfolded proteins bind initially to DnaJ; upon interaction with the DnaJ-bound protein, DnaK hydrolyzes its bound ATP, resulting in the formation of a stable complex. GrpE releases ADP from DnaK; ATP binding to DnaK triggers the release of the substrate protein, thus completing the reaction cycle. Several rounds of ATP-dependent interactions between DnaJ, DnaK and GrpE are required for fully efficient folding. This is Protein GrpE from Latilactobacillus sakei (Lactobacillus sakei).